Consider the following 1033-residue polypeptide: PDZ domain-containing protein 7 (1033 aa).

PDZ domains follow at residues 86–168 and 210–293; these read SVRV…RMGR and IVHL…ETGR. Positions 323–344 are enriched in low complexity; that stretch reads ESSSSVSSCASSAPYSSGSLPS. Disordered stretches follow at residues 323-380, 444-464, 754-864, and 943-1033; these read ESSS…GGRV, KQQR…LQRS, EPLS…KTVT, and MELV…PRIP. Over residues 770-784 the composition is skewed to basic residues; that stretch reads AQSRSRSRSRSRSRS. Low complexity predominate over residues 785-797; that stretch reads SRGQGKSPGRRSP. The 73-residue stretch at 862-934 folds into the PDZ 3 domain; that stretch reads TVTLSKMKQS…QRAVDTIRRA (73 aa). The span at 991 to 1000 shows a compositional bias: pro residues; that stretch reads PEPPTNPQTP.

In terms of assembly, homodimerizes (via PDZ2 domain). Component of USH2 complex, composed of ADGRV1, PDZD7, USH2A and WHRN. Interacts (via PDZ domains) with WHRN; the interaction is direct. Interacts with USH1G. Interacts with ADGRV1 (via the cytoplasmic region). Interacts with USH2A (via the cytoplasmic region). Interacts with MYO7A (via MyTH4-FERM domains). In terms of tissue distribution, weakly expressed in the inner ear. Expressed in the retinal pigment epithelium.

The protein localises to the cell projection. It localises to the cilium. The protein resides in the nucleus. Its subcellular location is the stereocilium. Functionally, in cochlear developing hair cells, essential in organizing the USH2 complex at stereocilia ankle links. Blocks inhibition of adenylate cyclase activity mediated by ADGRV1. The chain is PDZ domain-containing protein 7 from Homo sapiens (Human).